The primary structure comprises 31 residues: YSPSLTDLQSYNAMNGPALKAGDILAVPLPA.

Residues 1–28 form a LysM 1 repeat; it reads YSPSLTDLQSYNAMNGPALKAGDILAVP.

The polypeptide is LysM-domain containing protein (Jatropha curcas (Barbados nut)).